Reading from the N-terminus, the 504-residue chain is UDP-N-acetylmuramoylalanine--D-glutamate ligase (504 aa).

Residue 129 to 135 coordinates ATP; it reads GTNGKTT.

Belongs to the MurCDEF family.

The protein localises to the cytoplasm. It carries out the reaction UDP-N-acetyl-alpha-D-muramoyl-L-alanine + D-glutamate + ATP = UDP-N-acetyl-alpha-D-muramoyl-L-alanyl-D-glutamate + ADP + phosphate + H(+). Its pathway is cell wall biogenesis; peptidoglycan biosynthesis. In terms of biological role, cell wall formation. Catalyzes the addition of glutamate to the nucleotide precursor UDP-N-acetylmuramoyl-L-alanine (UMA). This Burkholderia mallei (strain NCTC 10247) protein is UDP-N-acetylmuramoylalanine--D-glutamate ligase.